The primary structure comprises 539 residues: T-complex protein 1 subunit zeta (539 aa).

The protein belongs to the TCP-1 chaperonin family. As to quaternary structure, heterooligomeric complex of about 850 to 900 kDa that forms two stacked rings, 12 to 16 nm in diameter.

The protein resides in the cytoplasm. Functionally, molecular chaperone; assists the folding of proteins upon ATP hydrolysis. Known to play a role, in vitro, in the folding of actin and tubulin. The sequence is that of T-complex protein 1 subunit zeta (cct6) from Dictyostelium discoideum (Social amoeba).